The following is a 737-amino-acid chain: Protein-glucosylgalactosylhydroxylysine glucosidase (737 aa).

300 to 301 (WD) contacts substrate. Catalysis depends on glutamate 430, which acts as the Proton donor. 498–499 (KQ) contacts substrate. Residues 681 to 737 (RSAGRIQMSPPKLPGSSSSEFPGRTFSDVRDPLQSPLWVTLGSSSPTESLTVDPASE) are disordered. Over residues 721–730 (LGSSSPTESL) the composition is skewed to polar residues.

This sequence belongs to the glycosyl hydrolase 65 family.

The catalysed reaction is (5R)-5-O-[alpha-D-glucosyl-(1-&gt;2)-beta-D-galactosyl]-5-hydroxy-L-lysyl-[collagen] + H2O = (5R)-5-O-(beta-D-galactosyl)-5-hydroxy-L-lysyl-[collagen] + D-glucose. In terms of biological role, catalyzes the hydrolysis of glucose from the disaccharide unit linked to hydroxylysine residues of collagen and collagen-like proteins. The sequence is that of Protein-glucosylgalactosylhydroxylysine glucosidase from Homo sapiens (Human).